Reading from the N-terminus, the 200-residue chain is Beta-1,6-glucan synthesis-associated protein KEG1 (200 aa).

Residues 1–15 (MAGIKLTHKLYQYYQ) lie on the Lumenal side of the membrane. The chain crosses the membrane as a helical span at residues 16–36 (LATSFLYAALLIRWLILMPLV). Residues 37–44 (GSRFLPGG) are Cytoplasmic-facing. A helical transmembrane segment spans residues 45–65 (IHEFLIYLMFYSSIMEVIWLL). The Lumenal portion of the chain corresponds to 66-82 (RFHGFKYGLLSRTFLKD). The helical transmembrane segment at 83 to 103 (LNFIYLVSVIHFYDDYEHALI) threads the bilayer. Topologically, residues 104–145 (LKNASYSSFIISLSLSQAYCHWCKLFKRKGVKERTLVWKVNT) are cytoplasmic. Residues 146–166 (FVTLPILYLSEFALLLLNIQV) traverse the membrane as a helical segment. Topologically, residues 167–173 (KNYHSTP) are lumenal. A helical membrane pass occupies residues 174–194 (TLDIINRVVLLAYFPVLLTAY). Residues 195–200 (KKLLTK) lie on the Cytoplasmic side of the membrane.

Interacts with KRE6.

The protein resides in the endoplasmic reticulum membrane. Functionally, involved in the biosynthesis of (1-&gt;6)-beta-D-glucan polymers of the cell wall. Required for viability. Involved in maintaining chromosome stability. This chain is Beta-1,6-glucan synthesis-associated protein KEG1 (KEG1), found in Saccharomyces cerevisiae (strain ATCC 204508 / S288c) (Baker's yeast).